A 153-amino-acid polypeptide reads, in one-letter code: Small ribosomal subunit protein bS16 (153 aa).

The interval 130–153 is disordered; the sequence is EAEAAAAAEEAPAEEAAEEAPAEA. A compositionally biased stretch (acidic residues) spans 140-153; that stretch reads APAEEAAEEAPAEA.

This sequence belongs to the bacterial ribosomal protein bS16 family.

The protein is Small ribosomal subunit protein bS16 of Bifidobacterium longum (strain NCC 2705).